The following is a 212-amino-acid chain: Nascent polypeptide-associated complex subunit alpha-like protein 4 (212 aa).

Residues 25–35 (QKENDVVVEDV) show a composition bias toward basic and acidic residues. The tract at residues 25-74 (QKENDVVVEDVKDGDEDDDDVDDDDDEIADGAGENEASKQSRSEKKSRKA) is disordered. Positions 36–53 (KDGDEDDDDVDDDDDEIA) are enriched in acidic residues. Residues 65–130 (SRSEKKSRKA…AKIDDMSSQL (66 aa)) enclose the NAC-A/B domain. Residues 173–210 (VEAKDIDLVMTQAGVSRPKAVKALKESNGDIVSAIMEL) form the UBA domain.

Belongs to the NAC-alpha family.

In terms of biological role, may promote appropriate targeting of ribosome-nascent polypeptide complexes. This Arabidopsis thaliana (Mouse-ear cress) protein is Nascent polypeptide-associated complex subunit alpha-like protein 4.